The chain runs to 173 residues: Crossover junction endodeoxyribonuclease RuvC (173 aa).

Catalysis depends on residues D8, E67, and D139. Mg(2+) is bound by residues D8, E67, and D139.

It belongs to the RuvC family. In terms of assembly, homodimer which binds Holliday junction (HJ) DNA. The HJ becomes 2-fold symmetrical on binding to RuvC with unstacked arms; it has a different conformation from HJ DNA in complex with RuvA. In the full resolvosome a probable DNA-RuvA(4)-RuvB(12)-RuvC(2) complex forms which resolves the HJ. Requires Mg(2+) as cofactor.

The protein localises to the cytoplasm. The enzyme catalyses Endonucleolytic cleavage at a junction such as a reciprocal single-stranded crossover between two homologous DNA duplexes (Holliday junction).. The RuvA-RuvB-RuvC complex processes Holliday junction (HJ) DNA during genetic recombination and DNA repair. Endonuclease that resolves HJ intermediates. Cleaves cruciform DNA by making single-stranded nicks across the HJ at symmetrical positions within the homologous arms, yielding a 5'-phosphate and a 3'-hydroxyl group; requires a central core of homology in the junction. The consensus cleavage sequence is 5'-(A/T)TT(C/G)-3'. Cleavage occurs on the 3'-side of the TT dinucleotide at the point of strand exchange. HJ branch migration catalyzed by RuvA-RuvB allows RuvC to scan DNA until it finds its consensus sequence, where it cleaves and resolves the cruciform DNA. This chain is Crossover junction endodeoxyribonuclease RuvC, found in Vibrio campbellii (strain ATCC BAA-1116).